The following is a 70-amino-acid chain: Translation initiation factor IF-1 (70 aa).

Residues 1 to 70 (MKETNLSIKG…LTKGRIIYRH (70 aa)) form the S1-like domain.

Belongs to the IF-1 family. As to quaternary structure, component of the 30S ribosomal translation pre-initiation complex which assembles on the 30S ribosome in the order IF-2 and IF-3, IF-1 and N-formylmethionyl-tRNA(fMet); mRNA recruitment can occur at any time during PIC assembly.

It is found in the cytoplasm. Functionally, one of the essential components for the initiation of protein synthesis. Stabilizes the binding of IF-2 and IF-3 on the 30S subunit to which N-formylmethionyl-tRNA(fMet) subsequently binds. Helps modulate mRNA selection, yielding the 30S pre-initiation complex (PIC). Upon addition of the 50S ribosomal subunit IF-1, IF-2 and IF-3 are released leaving the mature 70S translation initiation complex. The protein is Translation initiation factor IF-1 of Mycoplasmoides gallisepticum (strain R(low / passage 15 / clone 2)) (Mycoplasma gallisepticum).